Here is a 444-residue protein sequence, read N- to C-terminus: ATP-dependent RNA helicase SrmB (444 aa).

Residues T4–A32 carry the Q motif motif. The Helicase ATP-binding domain maps to I35–E209. A48–T55 is a binding site for ATP. Residues D157–D160 carry the DEAD box motif. The region spanning L238–S387 is the Helicase C-terminal domain. Residues K382–T391 show a composition bias toward basic and acidic residues. Positions K382–E444 are disordered. 2 stretches are compositionally biased toward basic residues: residues P394–K406 and P414–P432.

The protein belongs to the DEAD box helicase family. SrmB subfamily. As to quaternary structure, interacts with the 50S ribosomal subunit. Forms a complex with the 50S ribosomal proteins L4 and L24, and a region near the 5'-end of 23S rRNA.

The protein localises to the cytoplasm. It carries out the reaction ATP + H2O = ADP + phosphate + H(+). DEAD-box RNA helicase involved in the assembly of the 50S ribosomal subunit at low temperature. Exhibits RNA-stimulated ATP hydrolysis and RNA unwinding activity. Acts before DeaD. In Escherichia coli (strain K12), this protein is ATP-dependent RNA helicase SrmB.